We begin with the raw amino-acid sequence, 82 residues long: Large ribosomal subunit protein bL27 (82 aa).

Residues 1-20 (MATKKAGGSSSNGRDSIGKR) are disordered.

The protein belongs to the bacterial ribosomal protein bL27 family.

The polypeptide is Large ribosomal subunit protein bL27 (Neorickettsia sennetsu (strain ATCC VR-367 / Miyayama) (Ehrlichia sennetsu)).